The primary structure comprises 353 residues: Polycomb group RING finger protein 6 (353 aa).

Positions 1–116 (MDEAETDATE…FSLRLESGRA (116 aa)) are disordered. A compositionally biased stretch (basic and acidic residues) spans 9-19 (TENKRASEAKR). The span at 23–39 (MPPPPPPPPPISPPALI) shows a compositional bias: pro residues. Position 34 is a phosphoserine (Ser-34). Residues 40 to 52 (PAPAAGEEGPASL) show a composition bias toward low complexity. The span at 69 to 82 (EPERSLGRLRGRFE) shows a compositional bias: basic and acidic residues. The stretch at 71–112 (ERSLGRLRGRFEDYDEELEEEEEMEEEEEEEEEMSHFSLRLE) forms a coiled coil. Over residues 83-103 (DYDEELEEEEEMEEEEEEEEE) the composition is skewed to acidic residues. Ser-118 carries the post-translational modification Phosphoserine. The RING-type zinc finger occupies 137-176 (CSICKGYLIDATTITECLHTFCKSCIVRHFYYSNRCPKCN). Glycyl lysine isopeptide (Lys-Gly) (interchain with G-Cter in SUMO2) cross-links involve residues Lys-226 and Lys-237.

In terms of assembly, component of a PRC1-like complex. Interacts with BMI1/PCGF4, RING1 and RNF2. Interacts with KDM5D. Interacts with CBX4, CBX6, CBX7 and CBX8. Phosphorylated during mitosis. In terms of tissue distribution, expressed in ovary, testis, stomach, liver, thymus and kidney (at protein level).

The protein resides in the nucleus. Its function is as follows. Transcriptional repressor. May modulate the levels of histone H3K4Me3 by activating KDM5D histone demethylase. Component of a Polycomb group (PcG) multiprotein PRC1-like complex, a complex class required to maintain the transcriptionally repressive state of many genes, including Hox genes, throughout development. PcG PRC1 complex acts via chromatin remodeling and modification of histones; it mediates monoubiquitination of histone H2A 'Lys-119', rendering chromatin heritably changed in its expressibility. Within the PRC1-like complex, regulates RNF2 ubiquitin ligase activity. The protein is Polycomb group RING finger protein 6 (Pcgf6) of Mus musculus (Mouse).